Reading from the N-terminus, the 318-residue chain is Sensor histidine kinase NatK (318 aa).

The next 3 membrane-spanning stretches (helical) occupy residues 4–24 (LFQCLYLILFSFICYQGAAAF), 27–47 (STAASWLAAALGAAAAGLYIW), and 72–82 (VGVVLIGTDIM). The region spanning 132–318 (RNHDTMKHIT…RLEIKIPFQK (187 aa)) is the Histidine kinase domain. His-134 carries the phosphohistidine; by autocatalysis modification.

The protein resides in the cell membrane. It catalyses the reaction ATP + protein L-histidine = ADP + protein N-phospho-L-histidine.. Member of the two-component regulatory system NatK/NatR that positively regulates the expression of the natAB operon. Potentially phosphorylates NatR. The sequence is that of Sensor histidine kinase NatK from Bacillus subtilis (strain 168).